The following is a 183-amino-acid chain: (2E)-enoyl-[ACP] glycyltransferase (183 aa).

This sequence belongs to the FcoT family.

It carries out the reaction a (3R)-3-[(carboxymethyl)amino]fatty acid + holo-[ACP] + H(+) = a (2E)-enoyl-[ACP] + glycine + H2O. It catalyses the reaction (3R)-3-[(carboxylmethyl)amino]decanoate + holo-[ACP] + H(+) = (2E)-decenoyl-[ACP] + glycine + H2O. The enzyme catalyses a fatty acyl-CoA + H2O = a fatty acid + CoA + H(+). Involved in the biosynthesis of a unique class of isonitrile lipopeptides (INLPs) that seem to play a role in metal acquisition. Catalyzes a Michael addition of glycine to the beta-position of an alpha,beta-unsaturated fatty acyl-[ACP], producing a (3R)-3-[(carboxymethyl)amino]fatty acid. Acts on the (2E)-decenoyl moiety loaded on the acyl-carrier protein (ACP) BQ2027_MB0103, forming the product (3R)-3-[(carboxymethyl)amino]decanoate released from the ACP. Displays thioesterase activity with a preference for long chain fatty acyl groups. This Mycobacterium bovis (strain ATCC BAA-935 / AF2122/97) protein is (2E)-enoyl-[ACP] glycyltransferase.